We begin with the raw amino-acid sequence, 232 residues long: Adenosylcobinamide-GDP ribazoletransferase (232 aa).

The next 6 membrane-spanning stretches (helical) occupy residues 31–51 (LPSF…LGAL), 59–79 (VFFL…GFLD), 102–122 (VGPF…NLYL), 126–146 (PFYF…LMAF), 167–187 (LLIS…YIIS), and 209–229 (VTGD…LLIL).

The protein belongs to the CobS family. Mg(2+) serves as cofactor.

It is found in the cell inner membrane. It catalyses the reaction alpha-ribazole + adenosylcob(III)inamide-GDP = adenosylcob(III)alamin + GMP + H(+). It carries out the reaction alpha-ribazole 5'-phosphate + adenosylcob(III)inamide-GDP = adenosylcob(III)alamin 5'-phosphate + GMP + H(+). It functions in the pathway cofactor biosynthesis; adenosylcobalamin biosynthesis; adenosylcobalamin from cob(II)yrinate a,c-diamide: step 7/7. Functionally, joins adenosylcobinamide-GDP and alpha-ribazole to generate adenosylcobalamin (Ado-cobalamin). Also synthesizes adenosylcobalamin 5'-phosphate from adenosylcobinamide-GDP and alpha-ribazole 5'-phosphate. The protein is Adenosylcobinamide-GDP ribazoletransferase of Thermosipho africanus (strain TCF52B).